Consider the following 550-residue polypeptide: Arginine--tRNA ligase (550 aa).

Residues 125–135 carry the 'HIGH' region motif; the sequence is ANPTGPLHIGH.

The protein belongs to the class-I aminoacyl-tRNA synthetase family. As to quaternary structure, monomer.

The protein resides in the cytoplasm. It carries out the reaction tRNA(Arg) + L-arginine + ATP = L-arginyl-tRNA(Arg) + AMP + diphosphate. This is Arginine--tRNA ligase from Lawsonia intracellularis (strain PHE/MN1-00).